Consider the following 296-residue polypeptide: NAD kinase (296 aa).

Aspartate 73 acts as the Proton acceptor in catalysis. Residues 73–74 (DG), lysine 78, 151–152 (NE), arginine 178, aspartate 180, and 191–196 (TAHAMS) each bind NAD(+).

Belongs to the NAD kinase family. Requires a divalent metal cation as cofactor.

It is found in the cytoplasm. It catalyses the reaction NAD(+) + ATP = ADP + NADP(+) + H(+). Functionally, involved in the regulation of the intracellular balance of NAD and NADP, and is a key enzyme in the biosynthesis of NADP. Catalyzes specifically the phosphorylation on 2'-hydroxyl of the adenosine moiety of NAD to yield NADP. The sequence is that of NAD kinase from Francisella tularensis subsp. tularensis (strain WY96-3418).